The sequence spans 294 residues: NAD kinase (294 aa).

Asp-74 functions as the Proton acceptor in the catalytic mechanism. Residues Asp-74–Gly-75, Arg-79, Asn-149–Glu-150, Asp-179, Thr-190–Ser-195, and Ala-214 each bind NAD(+).

The protein belongs to the NAD kinase family. A divalent metal cation is required as a cofactor.

It is found in the cytoplasm. It carries out the reaction NAD(+) + ATP = ADP + NADP(+) + H(+). Involved in the regulation of the intracellular balance of NAD and NADP, and is a key enzyme in the biosynthesis of NADP. Catalyzes specifically the phosphorylation on 2'-hydroxyl of the adenosine moiety of NAD to yield NADP. The protein is NAD kinase of Flavobacterium johnsoniae (strain ATCC 17061 / DSM 2064 / JCM 8514 / BCRC 14874 / CCUG 350202 / NBRC 14942 / NCIMB 11054 / UW101) (Cytophaga johnsonae).